Here is a 148-residue protein sequence, read N- to C-terminus: Large ribosomal subunit protein bL9 (148 aa).

This sequence belongs to the bacterial ribosomal protein bL9 family.

In terms of biological role, binds to the 23S rRNA. This Heliobacterium modesticaldum (strain ATCC 51547 / Ice1) protein is Large ribosomal subunit protein bL9.